A 360-amino-acid polypeptide reads, in one-letter code: UDP-N-acetylglucosamine--N-acetylmuramyl-(pentapeptide) pyrophosphoryl-undecaprenol N-acetylglucosamine transferase (360 aa).

Residues 12-14 (TGG), N124, R161, S189, I243, and Q288 each bind UDP-N-acetyl-alpha-D-glucosamine.

This sequence belongs to the glycosyltransferase 28 family. MurG subfamily.

The protein localises to the cell inner membrane. The catalysed reaction is di-trans,octa-cis-undecaprenyl diphospho-N-acetyl-alpha-D-muramoyl-L-alanyl-D-glutamyl-meso-2,6-diaminopimeloyl-D-alanyl-D-alanine + UDP-N-acetyl-alpha-D-glucosamine = di-trans,octa-cis-undecaprenyl diphospho-[N-acetyl-alpha-D-glucosaminyl-(1-&gt;4)]-N-acetyl-alpha-D-muramoyl-L-alanyl-D-glutamyl-meso-2,6-diaminopimeloyl-D-alanyl-D-alanine + UDP + H(+). It functions in the pathway cell wall biogenesis; peptidoglycan biosynthesis. Functionally, cell wall formation. Catalyzes the transfer of a GlcNAc subunit on undecaprenyl-pyrophosphoryl-MurNAc-pentapeptide (lipid intermediate I) to form undecaprenyl-pyrophosphoryl-MurNAc-(pentapeptide)GlcNAc (lipid intermediate II). This Acidithiobacillus ferrooxidans (strain ATCC 23270 / DSM 14882 / CIP 104768 / NCIMB 8455) (Ferrobacillus ferrooxidans (strain ATCC 23270)) protein is UDP-N-acetylglucosamine--N-acetylmuramyl-(pentapeptide) pyrophosphoryl-undecaprenol N-acetylglucosamine transferase.